A 108-amino-acid chain; its full sequence is Large ribosomal subunit protein bL21 (108 aa).

This sequence belongs to the bacterial ribosomal protein bL21 family. As to quaternary structure, part of the 50S ribosomal subunit. Contacts protein L20.

Functionally, this protein binds to 23S rRNA in the presence of protein L20. This Acidobacterium capsulatum (strain ATCC 51196 / DSM 11244 / BCRC 80197 / JCM 7670 / NBRC 15755 / NCIMB 13165 / 161) protein is Large ribosomal subunit protein bL21.